Reading from the N-terminus, the 890-residue chain is Phosphotransferase RcsD (890 aa).

The Cytoplasmic segment spans residues 1–21 (MRQKETTATTRFSLLPGSITR). Residues 22-42 (FFLLLIIVLLVTMGVMVQSAV) traverse the membrane as a helical segment. The Periplasmic portion of the chain corresponds to 43 to 308 (NAWLKDKSYQ…GTLLLDTLQN (266 aa)). A helical transmembrane segment spans residues 309–329 (ILLPLLLNIGLLALALFGYTT). The Cytoplasmic portion of the chain corresponds to 330-890 (FRHFSSRSTE…DIDSYVKSLL (561 aa)). Positions 468–678 (NIGDALKEPA…RYSVHIKMLA (211 aa)) are histidine-like kinase. Residues 803–890 (AQLHASGYYA…DIDSYVKSLL (88 aa)) form the HPt domain. The residue at position 842 (His-842) is a Phosphohistidine.

The protein belongs to the RcsD family. In terms of assembly, interacts with RcsC and RcsB. Has a higher affinity for RcsB than for RcsC. Phosphorylated by RcsC.

The protein localises to the cell inner membrane. In terms of biological role, component of the Rcs signaling system, which controls transcription of numerous genes. RcsD is a phosphotransfer intermediate between the sensor kinase RcsC and the response regulator RcsB. It acquires a phosphoryl group from RcsC and transfers it to RcsB. The system controls expression of genes involved in colanic acid capsule synthesis, biofilm formation and cell division. This is Phosphotransferase RcsD from Escherichia coli (strain K12).